We begin with the raw amino-acid sequence, 268 residues long: Malonyl-[acyl-carrier protein] O-methyltransferase 1 (268 aa).

Belongs to the methyltransferase superfamily.

The enzyme catalyses malonyl-[ACP] + S-adenosyl-L-methionine = malonyl-[ACP] methyl ester + S-adenosyl-L-homocysteine. It participates in cofactor biosynthesis; biotin biosynthesis. In terms of biological role, converts the free carboxyl group of a malonyl-thioester to its methyl ester by transfer of a methyl group from S-adenosyl-L-methionine (SAM). It allows to synthesize pimeloyl-ACP via the fatty acid synthetic pathway. This is Malonyl-[acyl-carrier protein] O-methyltransferase 1 from Ilyobacter polytropus (strain ATCC 51220 / DSM 2926 / LMG 16218 / CuHBu1).